The following is a 102-amino-acid chain: Aspartyl/glutamyl-tRNA(Asn/Gln) amidotransferase subunit C (102 aa).

Belongs to the GatC family. In terms of assembly, heterotrimer of A, B and C subunits.

The enzyme catalyses L-glutamyl-tRNA(Gln) + L-glutamine + ATP + H2O = L-glutaminyl-tRNA(Gln) + L-glutamate + ADP + phosphate + H(+). It carries out the reaction L-aspartyl-tRNA(Asn) + L-glutamine + ATP + H2O = L-asparaginyl-tRNA(Asn) + L-glutamate + ADP + phosphate + 2 H(+). In terms of biological role, allows the formation of correctly charged Asn-tRNA(Asn) or Gln-tRNA(Gln) through the transamidation of misacylated Asp-tRNA(Asn) or Glu-tRNA(Gln) in organisms which lack either or both of asparaginyl-tRNA or glutaminyl-tRNA synthetases. The reaction takes place in the presence of glutamine and ATP through an activated phospho-Asp-tRNA(Asn) or phospho-Glu-tRNA(Gln). This is Aspartyl/glutamyl-tRNA(Asn/Gln) amidotransferase subunit C from Lactobacillus acidophilus (strain ATCC 700396 / NCK56 / N2 / NCFM).